A 349-amino-acid chain; its full sequence is N-acetyl-gamma-glutamyl-phosphate reductase (349 aa).

Residue Cys149 is part of the active site.

This sequence belongs to the NAGSA dehydrogenase family. Type 1 subfamily.

The protein localises to the cytoplasm. The enzyme catalyses N-acetyl-L-glutamate 5-semialdehyde + phosphate + NADP(+) = N-acetyl-L-glutamyl 5-phosphate + NADPH + H(+). It functions in the pathway amino-acid biosynthesis; L-arginine biosynthesis; N(2)-acetyl-L-ornithine from L-glutamate: step 3/4. Catalyzes the NADPH-dependent reduction of N-acetyl-5-glutamyl phosphate to yield N-acetyl-L-glutamate 5-semialdehyde. In Acinetobacter baumannii (strain SDF), this protein is N-acetyl-gamma-glutamyl-phosphate reductase.